Reading from the N-terminus, the 107-residue chain is Replication initiation control protein YabA (107 aa).

4 residues coordinate Zn(2+): histidine 81, cysteine 83, cysteine 97, and cysteine 100.

Belongs to the YabA family. As to quaternary structure, homotetramer. Interacts with both DnaA and DnaN, acting as a bridge between these two proteins. Zn(2+) is required as a cofactor.

The protein localises to the cytoplasm. Its subcellular location is the nucleoid. Its function is as follows. Involved in control of chromosome replication initiation. Inhibits the cooperative binding of DnaA to the oriC region, thus negatively regulating initiation of chromosome replication. Inhibits the ability of DnaA-ATP to form a helix on DNA; does not disassemble preformed DnaA-DNA helices. Decreases the residence time of DnaA on the chromosome at its binding sites (oriC, replication forks and promoter-binding sites). Tethers DnaA to the replication machinery via the DNA polymerase beta sliding clamp subunit (dnaN). Associates with oriC and other DnaA targets on the chromosome in a DnaA-dependent manner. The chain is Replication initiation control protein YabA from Streptococcus pyogenes serotype M3 (strain ATCC BAA-595 / MGAS315).